The sequence spans 490 residues: Glutamate--tRNA ligase (490 aa).

The 'HIGH' region signature appears at 15–25 (PSPTGYLHVGG). A 'KMSKS' region motif is present at residues 259–263 (KLSKR). Lys262 is a binding site for ATP.

This sequence belongs to the class-I aminoacyl-tRNA synthetase family. Glutamate--tRNA ligase type 1 subfamily. Monomer.

It is found in the cytoplasm. It catalyses the reaction tRNA(Glu) + L-glutamate + ATP = L-glutamyl-tRNA(Glu) + AMP + diphosphate. Its function is as follows. Catalyzes the attachment of glutamate to tRNA(Glu) in a two-step reaction: glutamate is first activated by ATP to form Glu-AMP and then transferred to the acceptor end of tRNA(Glu). The chain is Glutamate--tRNA ligase from Bdellovibrio bacteriovorus (strain ATCC 15356 / DSM 50701 / NCIMB 9529 / HD100).